The chain runs to 507 residues: DNA ligase B (507 aa).

Residues 1 to 172 (MLLHDVAITS…AAAAGLSGAA (172 aa)) are not required for adenylyltransferase activity, required for nick joining. Position 209 (E209) interacts with ATP. K211 serves as the catalytic N6-AMP-lysine intermediate. Positions 216, 231, 260, 300, 372, and 378 each coordinate ATP.

This sequence belongs to the ATP-dependent DNA ligase family. Monomer. Requires Mg(2+) as cofactor.

It catalyses the reaction ATP + (deoxyribonucleotide)n-3'-hydroxyl + 5'-phospho-(deoxyribonucleotide)m = (deoxyribonucleotide)n+m + AMP + diphosphate.. Its function is as follows. DNA ligase that seals nicks in double-stranded DNA during DNA replication, DNA recombination and DNA repair. This Mycobacterium tuberculosis (strain ATCC 25618 / H37Rv) protein is DNA ligase B (ligB).